The chain runs to 444 residues: Transmembrane protein with metallophosphoesterase domain (444 aa).

The next 5 membrane-spanning stretches (helical) occupy residues 7–27 (LSLG…MIVS), 43–63 (LFRL…SIYI), 87–107 (MVVA…IFLV), 114–134 (FSLV…FLCV), and 162–182 (LALR…VGLL). A divalent metal cation-binding residues include aspartate 214, histidine 216, aspartate 246, asparagine 277, histidine 382, and histidine 384.

The protein belongs to the metallophosphoesterase superfamily. LOC643853 family. It depends on a divalent metal cation as a cofactor.

Its subcellular location is the membrane. In Bos taurus (Bovine), this protein is Transmembrane protein with metallophosphoesterase domain (TMPPE).